A 208-amino-acid polypeptide reads, in one-letter code: MVSGRVQALLEQLRAQGIRDEQVLNALAAVPREKFIDEAFEHKAWENIALPIGQGQTISQPYMVARMTELLELTPQSRVLEIGTGSGYQTAILAHLVHHVCSVERIKGLQWQARRRLKQLDLHNVSTRHGDGWQGWQARAPFDAIIVTAAPPEIPTALMAQLDEGGILVLPVGDEQQFLKRVRRRGGEFIIDTVEAVRFVPLVKGELA.

The active site involves Ser-59.

The protein belongs to the methyltransferase superfamily. L-isoaspartyl/D-aspartyl protein methyltransferase family.

Its subcellular location is the cytoplasm. The enzyme catalyses [protein]-L-isoaspartate + S-adenosyl-L-methionine = [protein]-L-isoaspartate alpha-methyl ester + S-adenosyl-L-homocysteine. Functionally, catalyzes the methyl esterification of L-isoaspartyl residues in peptides and proteins that result from spontaneous decomposition of normal L-aspartyl and L-asparaginyl residues. It plays a role in the repair and/or degradation of damaged proteins. In Salmonella newport (strain SL254), this protein is Protein-L-isoaspartate O-methyltransferase.